The sequence spans 305 residues: Cytochrome c biogenesis protein CcsA (305 aa).

The next 8 helical transmembrane spans lie at V4–W24, S32–L52, G58–L78, I91–L111, V136–V156, T212–N232, T246–L263, and V275–I295.

Belongs to the CcmF/CycK/Ccl1/NrfE/CcsA family. As to quaternary structure, may interact with ccs1.

The protein resides in the cellular thylakoid membrane. Functionally, required during biogenesis of c-type cytochromes (cytochrome c6 and cytochrome f) at the step of heme attachment. This is Cytochrome c biogenesis protein CcsA from Synechococcus sp. (strain CC9311).